Reading from the N-terminus, the 108-residue chain is Protein YcgL (108 aa).

The 85-residue stretch at 12–96 folds into the YcgL domain; the sequence is MFCVIYRSSK…PPEDLLKQHL (85 aa).

This Shigella sonnei (strain Ss046) protein is Protein YcgL.